Here is a 423-residue protein sequence, read N- to C-terminus: Enolase (423 aa).

Gln166 is a binding site for (2R)-2-phosphoglycerate. Residue Glu208 is the Proton donor of the active site. Positions 242, 283, and 310 each coordinate Mg(2+). (2R)-2-phosphoglycerate-binding residues include Lys335, Arg364, Ser365, and Lys386. Lys335 acts as the Proton acceptor in catalysis.

This sequence belongs to the enolase family. Mg(2+) serves as cofactor.

It localises to the cytoplasm. Its subcellular location is the secreted. The protein localises to the cell surface. The enzyme catalyses (2R)-2-phosphoglycerate = phosphoenolpyruvate + H2O. It functions in the pathway carbohydrate degradation; glycolysis; pyruvate from D-glyceraldehyde 3-phosphate: step 4/5. Its function is as follows. Catalyzes the reversible conversion of 2-phosphoglycerate (2-PG) into phosphoenolpyruvate (PEP). It is essential for the degradation of carbohydrates via glycolysis. This chain is Enolase, found in Elusimicrobium minutum (strain Pei191).